An 885-amino-acid polypeptide reads, in one-letter code: Leucine--tRNA ligase (885 aa).

Residues 46–56 carry the 'HIGH' region motif; it reads PYPSGALHMGH. Positions 638 to 642 match the 'KMSKS' region motif; it reads KMSKS. Lys-641 contacts ATP.

This sequence belongs to the class-I aminoacyl-tRNA synthetase family.

The protein localises to the cytoplasm. The enzyme catalyses tRNA(Leu) + L-leucine + ATP = L-leucyl-tRNA(Leu) + AMP + diphosphate. This is Leucine--tRNA ligase from Xanthomonas campestris pv. campestris (strain B100).